The primary structure comprises 116 residues: uncharacterized protein (116 aa).

Residues 97 to 116 (AKGKGNEGREEAEEASGKSK) are disordered. Over residues 100 to 116 (KGNEGREEAEEASGKSK) the composition is skewed to basic and acidic residues.

This sequence belongs to the UPF0440 family.

This is an uncharacterized protein from Pyrococcus horikoshii (strain ATCC 700860 / DSM 12428 / JCM 9974 / NBRC 100139 / OT-3).